Here is a 191-residue protein sequence, read N- to C-terminus: Flagellar transcriptional regulator FlhC (191 aa).

Zn(2+)-binding residues include C137, C140, C157, and C160.

It belongs to the FlhC family. Heterohexamer composed of two FlhC and four FlhD subunits. Each FlhC binds a FlhD dimer, forming a heterotrimer, and a hexamer assembles by dimerization of two heterotrimers. Requires Zn(2+) as cofactor.

It is found in the cytoplasm. In terms of biological role, functions in complex with FlhD as a master transcriptional regulator that regulates transcription of several flagellar and non-flagellar operons by binding to their promoter region. Activates expression of class 2 flagellar genes, including fliA, which is a flagellum-specific sigma factor that turns on the class 3 genes. Also regulates genes whose products function in a variety of physiological pathways. This chain is Flagellar transcriptional regulator FlhC, found in Nitrosomonas eutropha (strain DSM 101675 / C91 / Nm57).